The chain runs to 143 residues: Nucleoside diphosphate kinase (143 aa).

Lysine 11, phenylalanine 59, arginine 87, threonine 93, arginine 104, and asparagine 114 together coordinate ATP. Histidine 117 functions as the Pros-phosphohistidine intermediate in the catalytic mechanism.

It belongs to the NDK family. Homotetramer. Requires Mg(2+) as cofactor.

It is found in the cytoplasm. It carries out the reaction a 2'-deoxyribonucleoside 5'-diphosphate + ATP = a 2'-deoxyribonucleoside 5'-triphosphate + ADP. The catalysed reaction is a ribonucleoside 5'-diphosphate + ATP = a ribonucleoside 5'-triphosphate + ADP. In terms of biological role, major role in the synthesis of nucleoside triphosphates other than ATP. The ATP gamma phosphate is transferred to the NDP beta phosphate via a ping-pong mechanism, using a phosphorylated active-site intermediate. This chain is Nucleoside diphosphate kinase, found in Klebsiella pneumoniae (strain 342).